The primary structure comprises 333 residues: Adenosine deaminase (333 aa).

Residues His12 and His14 each coordinate Zn(2+). Positions 14 and 16 each coordinate substrate. Pentostatin is bound by residues 14 to 16, Ser141, and Gly170; that span reads HLD. A substrate-binding site is contributed by Gly170. His197 contacts Zn(2+). Positions 200, 221, and 278 each coordinate pentostatin. Residue Glu200 is the Proton donor of the active site. Asp278 lines the Zn(2+) pocket. Asp279 is a substrate binding site.

The protein belongs to the metallo-dependent hydrolases superfamily. Adenosine and AMP deaminases family. Adenosine deaminase subfamily. The cofactor is Zn(2+).

It carries out the reaction adenosine + H2O + H(+) = inosine + NH4(+). The enzyme catalyses 2'-deoxyadenosine + H2O + H(+) = 2'-deoxyinosine + NH4(+). Its function is as follows. Catalyzes the hydrolytic deamination of adenosine and 2-deoxyadenosine. This chain is Adenosine deaminase, found in Salmonella typhimurium (strain LT2 / SGSC1412 / ATCC 700720).